A 118-amino-acid polypeptide reads, in one-letter code: Large ribosomal subunit protein bL20 (118 aa).

This sequence belongs to the bacterial ribosomal protein bL20 family.

Binds directly to 23S ribosomal RNA and is necessary for the in vitro assembly process of the 50S ribosomal subunit. It is not involved in the protein synthesizing functions of that subunit. The protein is Large ribosomal subunit protein bL20 of Protochlamydia amoebophila (strain UWE25).